The primary structure comprises 572 residues: Flagellin B (572 aa).

Belongs to the bacterial flagellin family. Heteromer of flaA and flaB.

Its subcellular location is the secreted. It is found in the bacterial flagellum. Its function is as follows. Flagellin is the subunit protein which polymerizes to form the filaments of bacterial flagella. The protein is Flagellin B (flaB) of Campylobacter jejuni subsp. jejuni serotype O:2 (strain ATCC 700819 / NCTC 11168).